The sequence spans 267 residues: NAD kinase 2 (267 aa).

Residue D50 is the Proton acceptor of the active site. NAD(+) is bound by residues 50–51 (DG), K55, 122–123 (NE), R149, D151, 162–167 (TAYNKS), and A186.

Belongs to the NAD kinase family. A divalent metal cation serves as cofactor.

It is found in the cytoplasm. It carries out the reaction NAD(+) + ATP = ADP + NADP(+) + H(+). Involved in the regulation of the intracellular balance of NAD and NADP, and is a key enzyme in the biosynthesis of NADP. Catalyzes specifically the phosphorylation on 2'-hydroxyl of the adenosine moiety of NAD to yield NADP. This chain is NAD kinase 2, found in Listeria monocytogenes serovar 1/2a (strain ATCC BAA-679 / EGD-e).